The primary structure comprises 500 residues: Serine carboxypeptidase 3 (500 aa).

The first 21 residues, 1–21 (MATTPRLASLLLLLALCAAAA), serve as a signal peptide directing secretion. The propeptide occupies 22–73 (GALRLPPDASFPGAQAERLIRALNLLPGRPRRGLGAGAEDVAPGQLLERRVT). Intrachain disulfides connect Cys-126–Cys-366, Cys-294–Cys-309, and Cys-332–Cys-337. Asn-144 is a glycosylation site (N-linked (GlcNAc...) asparagine). Ser-216 is a catalytic residue. Asp-404 is a catalytic residue. Residue Cys-407 participates in substrate binding. His-461 is an active-site residue. Residues 485–500 (ESVPEEEPATTFYAAI) constitute a propeptide that is removed on maturation.

The protein belongs to the peptidase S10 family. Monomer.

It carries out the reaction Release of a C-terminal amino acid with broad specificity.. This is Serine carboxypeptidase 3 (CBP3) from Triticum aestivum (Wheat).